The following is a 103-amino-acid chain: Methane monooxygenase component D (103 aa).

In terms of assembly, the soluble methane monooxygenase (sMMO) consists of four components A/MMOH (composed of alpha/MmoX, beta/MmoY and gamma/MmoZ), B/MMOB (MmoB), C/MMOR (MmoC) and D/MMOD (MmoD).

The protein is Methane monooxygenase component D (mmoD) of Methylococcus capsulatus (strain ATCC 33009 / NCIMB 11132 / Bath).